A 620-amino-acid polypeptide reads, in one-letter code: 1-deoxy-D-xylulose-5-phosphate synthase (620 aa).

Residues H80 and G121 to S123 contribute to the thiamine diphosphate site. D152 contributes to the Mg(2+) binding site. Thiamine diphosphate is bound by residues G153–A154, N181, Y288, and E370. N181 provides a ligand contact to Mg(2+).

The protein belongs to the transketolase family. DXPS subfamily. In terms of assembly, homodimer. The cofactor is Mg(2+). Thiamine diphosphate is required as a cofactor.

The catalysed reaction is D-glyceraldehyde 3-phosphate + pyruvate + H(+) = 1-deoxy-D-xylulose 5-phosphate + CO2. It participates in metabolic intermediate biosynthesis; 1-deoxy-D-xylulose 5-phosphate biosynthesis; 1-deoxy-D-xylulose 5-phosphate from D-glyceraldehyde 3-phosphate and pyruvate: step 1/1. Functionally, catalyzes the acyloin condensation reaction between C atoms 2 and 3 of pyruvate and glyceraldehyde 3-phosphate to yield 1-deoxy-D-xylulose-5-phosphate (DXP). The sequence is that of 1-deoxy-D-xylulose-5-phosphate synthase from Shigella sonnei (strain Ss046).